We begin with the raw amino-acid sequence, 238 residues long: Large ribosomal subunit protein uL2 (238 aa).

Disordered stretches follow at residues 1 to 34 (MGKR…PPLS) and 197 to 238 (VDHP…RRKR). Basic residues predominate over residues 224-238 (KVGHIAARRTGRRKR).

Belongs to the universal ribosomal protein uL2 family. In terms of assembly, part of the 50S ribosomal subunit. Forms a bridge to the 30S subunit in the 70S ribosome.

One of the primary rRNA binding proteins. Required for association of the 30S and 50S subunits to form the 70S ribosome, for tRNA binding and peptide bond formation. It has been suggested to have peptidyltransferase activity; this is somewhat controversial. Makes several contacts with the 16S rRNA in the 70S ribosome. The sequence is that of Large ribosomal subunit protein uL2 from Aeropyrum pernix (strain ATCC 700893 / DSM 11879 / JCM 9820 / NBRC 100138 / K1).